Here is a 312-residue protein sequence, read N- to C-terminus: Glyoxylate/hydroxypyruvate reductase A (312 aa).

Residue R227 is part of the active site. The active-site Proton donor is the H275.

The protein belongs to the D-isomer specific 2-hydroxyacid dehydrogenase family. GhrA subfamily.

Its subcellular location is the cytoplasm. The catalysed reaction is glycolate + NADP(+) = glyoxylate + NADPH + H(+). It catalyses the reaction (R)-glycerate + NAD(+) = 3-hydroxypyruvate + NADH + H(+). It carries out the reaction (R)-glycerate + NADP(+) = 3-hydroxypyruvate + NADPH + H(+). Its function is as follows. Catalyzes the NADPH-dependent reduction of glyoxylate and hydroxypyruvate into glycolate and glycerate, respectively. This chain is Glyoxylate/hydroxypyruvate reductase A, found in Escherichia coli (strain SMS-3-5 / SECEC).